The sequence spans 1000 residues: C-module-binding factor A (1000 aa).

One can recognise a JmjC domain in the interval 113 to 280 (PREWQEYLSH…ISYFSSLPHT (168 aa)). The PHD-type; atypical zinc-finger motif lies at 489–544 (KIKCHRCEKRFKKFSIIFCTNCNARFCEQCVVNTFGQNFQVLMKRNEWECFCCKGL). Residues 492 to 542 (CHRCEKRFKKFSIIFCTNCNARFCEQCVVNTFGQNFQVLMKRNEWECFCCK) form an RING-type; degenerate zinc finger. Disordered regions lie at residues 561–647 (RILN…SSYS) and 660–818 (SYGS…KNLK). Low complexity-rich tracts occupy residues 574-647 (NNNN…SSYS), 660-683 (SYGS…NNNN), 700-710 (SSSSGSGSSNS), 732-751 (NNNN…NNHH), and 760-789 (NNNN…STST). A compositionally biased stretch (basic and acidic residues) spans 805-818 (DNDKPKGRPPKNLK). Residues 810-818 (KGRPPKNLK) constitute a DNA-binding region (a.T hook).

As to quaternary structure, monomer.

Its subcellular location is the nucleus. Functionally, transcriptional regulator involved in phagocytosis and pinocytosis. Both activates and represses transcription. Regulates expression of acaA, carA, pkaC, csaA, cotB and lagC. Promotes amplification of the tRNA gene-associated retrotransposon TRE5-A, a mobile genetic element formerly called as Dictyostelium repetitive element (DRE). Suppresses agnC and agnE encoding argonaute proteins which are part of a RNA interference pathway controlling TRE5-A amplification. Required for amplification of both sense and antisense RNA transcripts, but does not activate their promoters found in A-module and C-module of the TRE5-A, respectively. Nevertheless, binds to distinct DNA sequences containing A and T stretches within the C-module in vitro. In Dictyostelium discoideum (Social amoeba), this protein is C-module-binding factor A.